We begin with the raw amino-acid sequence, 434 residues long: Enolase 2 (434 aa).

Q171 lines the (2R)-2-phosphoglycerate pocket. E213 (proton donor) is an active-site residue. Mg(2+) contacts are provided by D250, E293, and D320. (2R)-2-phosphoglycerate-binding residues include K345, R374, S375, and K396. The active-site Proton acceptor is K345.

It belongs to the enolase family. Mg(2+) serves as cofactor.

The protein resides in the cytoplasm. It localises to the secreted. Its subcellular location is the cell surface. The enzyme catalyses (2R)-2-phosphoglycerate = phosphoenolpyruvate + H2O. The protein operates within carbohydrate degradation; glycolysis; pyruvate from D-glyceraldehyde 3-phosphate: step 4/5. Catalyzes the reversible conversion of 2-phosphoglycerate (2-PG) into phosphoenolpyruvate (PEP). It is essential for the degradation of carbohydrates via glycolysis. The chain is Enolase 2 from Streptomyces coelicolor (strain ATCC BAA-471 / A3(2) / M145).